We begin with the raw amino-acid sequence, 103 residues long: Histone H4 (103 aa).

A compositionally biased stretch (gly residues) spans Met-1–Gly-14. The interval Met-1 to Arg-20 is disordered. N6-acetyl-N6-methyllysine; alternate is present on Lys-6. N6-acetyllysine; alternate is present on residues Lys-6, Lys-9, and Lys-13. Residues Lys-6, Lys-9, and Lys-13 each carry the N6-methyllysine; alternate modification. N6-butyryllysine; alternate is present on residues Lys-9 and Lys-13. Lys-13 bears the N6-acetyl-N6-methyllysine; alternate mark. Lys-17 is subject to N6-acetyllysine. A DNA-binding region spans residues Lys-17–Lys-21. N6-succinyllysine is present on Lys-32. Residue Arg-56 is modified to Omega-N-methylarginine. Residues Ser-61 and Ser-65 each carry the phosphoserine modification. Lys-78 is modified (N6-succinyllysine). Position 80 is an N6-acetyllysine (Lys-80). Lys-92 bears the N6-glutaryllysine mark.

The protein belongs to the histone H4 family. As to quaternary structure, the nucleosome is a histone octamer containing two molecules each of H2A, H2B, H3 and H4 assembled in one H3-H4 heterotetramer and two H2A-H2B heterodimers. The octamer wraps approximately 147 bp of DNA. Histone H4 is a component of the UAF (upstream activation factor) complex which consists of UAF30, RRN5, RRN9, RRN10, and histones H3 and H4. Post-translationally, glutarylation at Lys-92 (H4K91glu) destabilizes nucleosomes by promoting dissociation of the H2A-H2B dimers from nucleosomes.

Its subcellular location is the nucleus. The protein resides in the chromosome. Core component of nucleosome. Nucleosomes wrap and compact DNA into chromatin, limiting DNA accessibility to the cellular machineries which require DNA as a template. Histones thereby play a central role in transcription regulation, DNA repair, DNA replication and chromosomal stability. DNA accessibility is regulated via a complex set of post-translational modifications of histones, also called histone code, and nucleosome remodeling. Component of the UAF (upstream activation factor) complex which interacts with the upstream element of the RNA polymerase I promoter and forms a stable preinitiation complex. Together with SPT15/TBP UAF seems to stimulate basal transcription to a fully activated level. The polypeptide is Histone H4 (HHF1) (Saccharomyces cerevisiae (strain ATCC 204508 / S288c) (Baker's yeast)).